The chain runs to 579 residues: Potassium-transporting ATPase potassium-binding subunit (579 aa).

A run of 10 helical transmembrane segments spans residues 2-22 (MNLV…AIPL), 66-86 (SFSV…IHIF), 135-155 (GLTV…FALI), 177-197 (VLYI…SQGV), 262-282 (LSNL…CFTF), 292-312 (GIAI…IIGV), 391-411 (VFGG…LAVF), 437-457 (VLVC…ASIL), 490-510 (FAGF…SMLF), and 546-566 (FIGL…FPAL).

The protein belongs to the KdpA family. As to quaternary structure, the system is composed of three essential subunits: KdpA, KdpB and KdpC.

The protein resides in the cell membrane. Functionally, part of the high-affinity ATP-driven potassium transport (or Kdp) system, which catalyzes the hydrolysis of ATP coupled with the electrogenic transport of potassium into the cytoplasm. This subunit binds the extracellular potassium ions and delivers the ions to the membrane domain of KdpB through an intramembrane tunnel. The protein is Potassium-transporting ATPase potassium-binding subunit of Clostridium botulinum (strain Alaska E43 / Type E3).